A 559-amino-acid polypeptide reads, in one-letter code: Hepatocyte nuclear factor 1-beta (559 aa).

Residues 1-31 (MVSKLTSLQQELLSALLSSGVTKEVLVQALE) form a dimerization region. The HNF-p1 domain occupies 1 to 32 (MVSKLTSLQQELLSALLSSGVTKEVLVQALEE). 4 positions are modified to phosphoserine: serine 49, serine 52, serine 75, and serine 80. A POU-specific atypical domain is found at 93-188 (KELQALNTEE…ILRQFNQTVQ (96 aa)). The segment at residues 231-312 (MRRNRFKWGP…RRKEEEAFRQ (82 aa)) is a DNA-binding region (homeobox; HNF1-type). Residues 328-341 (NTLLSHSSPHHQPS) show a composition bias toward low complexity. The segment at 328 to 371 (NTLLSHSSPHHQPSTSPPNKLPGVRYNQQGNNEVTSSSTISHHG) is disordered. The segment covering 353-371 (YNQQGNNEVTSSSTISHHG) has biased composition (polar residues).

The protein belongs to the HNF1 homeobox family. In terms of assembly, binds DNA as a dimer. Can form homodimer or heterodimer with HNF1-alpha. Interacts (via HNF-p1 domain) with PCBD1; the interaction increases its transactivation activity.

The protein resides in the nucleus. Transcription factor that binds to the inverted palindrome 5'-GTTAATNATTAAC-3'. Binds to the FPC element in the cAMP regulatory unit of the PLAU gene. Transcriptional activity is increased by coactivator PCBD1. This is Hepatocyte nuclear factor 1-beta (HNF1B) from Sus scrofa (Pig).